A 466-amino-acid chain; its full sequence is Anthocyanidin 3-O-glucosyltransferase 1 (466 aa).

The active-site Proton acceptor is the His22. 2 residues coordinate an anthocyanidin: His22 and Gln87. Asp122 functions as the Charge relay in the catalytic mechanism. Residue Thr145 participates in UDP-alpha-D-glucose binding. His154 is a binding site for an anthocyanidin. The UDP-alpha-D-glucose site is built by Ala346, Gln348, His363, Trp366, Asn367, Ser368, and Glu371. An anthocyanidin is bound at residue Gly386. The UDP-alpha-D-glucose site is built by Asp387 and Gln388.

It belongs to the UDP-glycosyltransferase family. As to expression, highest expression detected in receptacles and achenes, with very low levels detected in runners, leaves, flowers, crowns and green receptacles.

It catalyses the reaction an anthocyanidin + UDP-alpha-D-glucose + H(+) = an anthocyanidin 3-O-beta-D-glucoside + UDP. It carries out the reaction cyanidin + UDP-alpha-D-glucose = cyanidin 3-O-beta-D-glucoside + UDP + H(+). The catalysed reaction is pelargonidin + UDP-alpha-D-glucose = pelargonidin 3-O-beta-D-glucoside + UDP. The enzyme catalyses peonidin + UDP-alpha-D-glucose = peonidin 3-O-beta-D-glucoside + UDP. It catalyses the reaction delphinidin + UDP-alpha-D-glucose = delphinidin 3-O-beta-D-glucoside + UDP. It carries out the reaction a flavonol + UDP-alpha-D-glucose = a flavonol 3-O-beta-D-glucoside + UDP + H(+). It functions in the pathway pigment biosynthesis; anthocyanin biosynthesis. Its function is as follows. In the presence of other necessary color factors, this glycosylation reaction allows the accumulation of anthocyanin pigments. Uses UDP-Glc as a sugar donor, but not UDP-Gal or UDP-GlcUA. Anthocyanidins are the preferred substrates in vivo, but flavonols can also be glucosylated in vitro. The protein is Anthocyanidin 3-O-glucosyltransferase 1 of Fragaria ananassa (Strawberry).